We begin with the raw amino-acid sequence, 215 residues long: MLQVYLVRHGETQWNAERRIQGQSDSPLTAKGEQQAMQVGERARSLGITHIISSDLGRTKRTAEIIAQACGCDITFDSRLRELDMGVLEKRQIDSLTEEEEGWRRQLVNGTQDGRIPDGESMQELSERVHAALASCLELPQGSRPLLVSHGIALGCLVSTILGLPAWAERRLRLRNCSISRVDYQESQWLASGWVVETAGDVSHLDAPALDELQR.

Residues 8 to 15 (RHGETQWN), 21 to 22 (QG), Arg-58, Lys-60, 82 to 85 (ELDM), 104 to 105 (RR), and 151 to 152 (GI) each bind substrate. The active-site Tele-phosphohistidine intermediate is His-9. Glu-82 acts as the Proton donor/acceptor in catalysis.

It belongs to the phosphoglycerate mutase family. GpmB subfamily.

The enzyme catalyses (2R)-2-phosphoglycerate = (2R)-3-phosphoglycerate. Its pathway is carbohydrate degradation; glycolysis; pyruvate from D-glyceraldehyde 3-phosphate: step 3/5. This chain is Probable phosphoglycerate mutase GpmB, found in Salmonella arizonae (strain ATCC BAA-731 / CDC346-86 / RSK2980).